Consider the following 350-residue polypeptide: Biotin synthase (350 aa).

Positions 1–13 (MVTQAATRPSNDA) are enriched in polar residues. Positions 1–20 (MVTQAATRPSNDAGQDGVTE) are disordered. In terms of domain architecture, Radical SAM core spans 71 to 296 (PEVEVEGIIS…RTMLRFAGGR (226 aa)). [4Fe-4S] cluster-binding residues include Cys-86, Cys-90, and Cys-93. [2Fe-2S] cluster is bound by residues Cys-129, Cys-162, Cys-221, and Arg-291.

The protein belongs to the radical SAM superfamily. Biotin synthase family. As to quaternary structure, homodimer. It depends on [4Fe-4S] cluster as a cofactor. Requires [2Fe-2S] cluster as cofactor.

The catalysed reaction is (4R,5S)-dethiobiotin + (sulfur carrier)-SH + 2 reduced [2Fe-2S]-[ferredoxin] + 2 S-adenosyl-L-methionine = (sulfur carrier)-H + biotin + 2 5'-deoxyadenosine + 2 L-methionine + 2 oxidized [2Fe-2S]-[ferredoxin]. It participates in cofactor biosynthesis; biotin biosynthesis; biotin from 7,8-diaminononanoate: step 2/2. Catalyzes the conversion of dethiobiotin (DTB) to biotin by the insertion of a sulfur atom into dethiobiotin via a radical-based mechanism. In Mycobacterium ulcerans (strain Agy99), this protein is Biotin synthase.